The following is a 30-amino-acid chain: V-type proton ATPase catalytic subunit A isoform 1 (30 aa).

The protein belongs to the ATPase alpha/beta chains family. In terms of assembly, V-ATPase is a heteromultimeric enzyme composed of a peripheral catalytic V1 complex (main components: subunits A, B, C, D, E, and F) attached to an integral membrane V0 proton pore complex (main component: the proteolipid protein).

It catalyses the reaction ATP + H2O + 4 H(+)(in) = ADP + phosphate + 5 H(+)(out). In terms of biological role, catalytic subunit of the peripheral V1 complex of vacuolar ATPase. V-ATPase vacuolar ATPase is responsible for acidifying a variety of intracellular compartments in eukaryotic cells. The chain is V-type proton ATPase catalytic subunit A isoform 1 from Equisetum arvense (Field horsetail).